A 354-amino-acid polypeptide reads, in one-letter code: NADH-quinone oxidoreductase subunit H (354 aa).

8 helical membrane-spanning segments follow: residues 22–42, 91–111, 124–144, 162–182, 203–223, 250–270, 291–311, and 326–346; these read ILIRAVLIVVPVLLCVAYLIL, YLVAPLMVLMPAVAVWAVIPF, LLYVMAISSVGVYGVILAGWA, VSYEIAMGFALVTVLMVSGSL, LLSWNWLPLLPMFGVYFISGV, GMTFALFFLAEYINMIIISTM, IPGFFWLVIKVFLLLSVFIWI, and LGWKIFIPLTVAWLIIVAIWI.

This sequence belongs to the complex I subunit 1 family. In terms of assembly, NDH-1 is composed of 14 different subunits. Subunits NuoA, H, J, K, L, M, N constitute the membrane sector of the complex.

The protein localises to the cell inner membrane. The enzyme catalyses a quinone + NADH + 5 H(+)(in) = a quinol + NAD(+) + 4 H(+)(out). In terms of biological role, NDH-1 shuttles electrons from NADH, via FMN and iron-sulfur (Fe-S) centers, to quinones in the respiratory chain. The immediate electron acceptor for the enzyme in this species is believed to be ubiquinone. Couples the redox reaction to proton translocation (for every two electrons transferred, four hydrogen ions are translocated across the cytoplasmic membrane), and thus conserves the redox energy in a proton gradient. This subunit may bind ubiquinone. This Cupriavidus metallidurans (strain ATCC 43123 / DSM 2839 / NBRC 102507 / CH34) (Ralstonia metallidurans) protein is NADH-quinone oxidoreductase subunit H.